Consider the following 478-residue polypeptide: Cell division protein FtsZ homolog 2-1, chloroplastic (478 aa).

The disordered stretch occupies residues 86-112 (EGTSTIVNPRKETSSGPVVEDFEEPSA). GTP is bound at residue 128 to 132 (GGGSN). S143 is modified (phosphoserine; by PGK1). GTP contacts are provided by residues 217–219 (GTG), E248, and R252. Phosphothreonine; by PGK1 is present on T286. D296 is a GTP binding site.

It belongs to the FtsZ family. Aggregates to form a contractile ring-like structure; contraction of the ring was accompanied by an increase in the filament turnover rate. Self-interacts and binds to FTSZ1 in heteromers to form two morphologically distinct types of filaments, termed type-I (smooth filaments) and -II (rough filaments), in a GTP-dependent manner; the GDP-induced disassembly is inhibited by ARC6. Interacts (via C-terminus) with ARC6; this interaction enables ARC3 binding to FTSZ2. Part of a complex made of ARC3, ARC6, FTSZ1 and FTSZ2. Binds to MCD1 in an ARC6-dependent manner. Binds to CDP1/PARC6. Part of a complex made of CDP1/PARC6, ARC3 and FtsZ proteins in the middle of the plastid; this complex enhances the dynamics of Z rings during chloroplast division. Binds to PGK1. Post-translationally, filaments containing FTSZ2-1 are stabilized when in complex with GTP but destabilized after conversion of GTP into GDP; ARC6 conteracts this destabilisation by preventing the dissociation of GDP-bound FTSZ2 molecules thus inhibiting filament disassembly whereas ARC3 promotes GTPase activity thus accelerating the conversion of GTP into GDP and triggering FtsZ2 filaments disassembly. Phosphorylation at Ser-143 is necessary for interactions with ARC3, ARC6, FTSZ1 and FTSZ2-2. Phosphorylations at Ser-143 and Thr-286 are required for the formation of contractile ring at the chloroplast midpoint.

It localises to the plastid. The protein localises to the chloroplast stroma. The protein resides in the chloroplast thylakoid membrane. Its activity is regulated as follows. GTPase activity is enhanced by ARC3. Exhibits GTPase activity which converts GTP ligands to GDP. Component of the plastid division machinery consisting in a binary fission accomplished by the simultaneous constriction of the FtsZ ring on the stromal side of the inner envelope membrane, and the ARC5 ring on the cytosolic side of the outer envelope membrane. Required for plastid division in a dose-dependent manner. In the vegetative shoot apex, at the shoot apical meristem (SAM), where the proplastid-to-chloroplast transition takes place, major contributor of plastid division in the L1 and L3 layers and contributes equally with FTSZ1 in the L2 layer. The sequence is that of Cell division protein FtsZ homolog 2-1, chloroplastic from Arabidopsis thaliana (Mouse-ear cress).